The primary structure comprises 155 residues: Interleukin-2 (155 aa).

The first 20 residues, 1–20 (MYKIQLLSCIALTLALVANG), serve as a signal peptide directing secretion. Residue Thr23 is glycosylated (O-linked (GalNAc...) threonine). A disulfide bridge links Cys79 with Cys127.

The protein belongs to the IL-2 family.

Its subcellular location is the secreted. Its function is as follows. Cytokine produced by activated CD4-positive helper T-cells and to a lesser extend activated CD8-positive T-cells and natural killer (NK) cells that plays pivotal roles in the immune response and tolerance. Binds to a receptor complex composed of either the high-affinity trimeric IL-2R (IL2RA/CD25, IL2RB/CD122 and IL2RG/CD132) or the low-affinity dimeric IL-2R (IL2RB and IL2RG). Interaction with the receptor leads to oligomerization and conformation changes in the IL-2R subunits resulting in downstream signaling starting with phosphorylation of JAK1 and JAK3. In turn, JAK1 and JAK3 phosphorylate the receptor to form a docking site leading to the phosphorylation of several substrates including STAT5. This process leads to activation of several pathways including STAT, phosphoinositide-3-kinase/PI3K and mitogen-activated protein kinase/MAPK pathways. Functions as a T-cell growth factor and can increase NK-cell cytolytic activity as well. Promotes strong proliferation of activated B-cells and subsequently immunoglobulin production. Plays a pivotal role in regulating the adaptive immune system by controlling the survival and proliferation of regulatory T-cells, which are required for the maintenance of immune tolerance. Moreover, participates in the differentiation and homeostasis of effector T-cell subsets, including Th1, Th2, Th17 as well as memory CD8-positive T-cells. This is Interleukin-2 (IL2) from Ovis aries (Sheep).